Consider the following 229-residue polypeptide: MIKAIVTDIEGTTSDIRFVHSVLFPYARERLADTVRQHDSDPEIAQVLNALRQELAQPDADSDTLIAALNQFMDEDRKSTSLKLLQGIIWRAGYRNGDFQGHLYPEVAAQLAAWQQQGLHLYVYSSGSVEAQRLLFGYSNAGDLRPLFSDYFDTRVGAKRETDSYRTIAQAIGLPAEQLLFLSDIRQELDAAQEAGWHTCQLIRDDADSVSRHRQAARFDQIDLPEYAQ.

It belongs to the HAD-like hydrolase superfamily. MasA/MtnC family. In terms of assembly, monomer. It depends on Mg(2+) as a cofactor.

It carries out the reaction 5-methylsulfanyl-2,3-dioxopentyl phosphate + H2O = 1,2-dihydroxy-5-(methylsulfanyl)pent-1-en-3-one + phosphate. Its pathway is amino-acid biosynthesis; L-methionine biosynthesis via salvage pathway; L-methionine from S-methyl-5-thio-alpha-D-ribose 1-phosphate: step 3/6. It functions in the pathway amino-acid biosynthesis; L-methionine biosynthesis via salvage pathway; L-methionine from S-methyl-5-thio-alpha-D-ribose 1-phosphate: step 4/6. Bifunctional enzyme that catalyzes the enolization of 2,3-diketo-5-methylthiopentyl-1-phosphate (DK-MTP-1-P) into the intermediate 2-hydroxy-3-keto-5-methylthiopentenyl-1-phosphate (HK-MTPenyl-1-P), which is then dephosphorylated to form the acireductone 1,2-dihydroxy-3-keto-5-methylthiopentene (DHK-MTPene). The chain is Enolase-phosphatase E1 from Pectobacterium atrosepticum (strain SCRI 1043 / ATCC BAA-672) (Erwinia carotovora subsp. atroseptica).